A 959-amino-acid chain; its full sequence is Isoleucine--tRNA ligase (959 aa).

A 'HIGH' region motif is present at residues 66-76; it reads PYANGDLHIGH. E592 is a binding site for L-isoleucyl-5'-AMP. The 'KMSKS' region motif lies at 633 to 637; that stretch reads KMSKS. K636 lines the ATP pocket. C922, C925, C942, and C945 together coordinate Zn(2+).

Belongs to the class-I aminoacyl-tRNA synthetase family. IleS type 1 subfamily. In terms of assembly, monomer. The cofactor is Zn(2+).

The protein resides in the cytoplasm. The enzyme catalyses tRNA(Ile) + L-isoleucine + ATP = L-isoleucyl-tRNA(Ile) + AMP + diphosphate. In terms of biological role, catalyzes the attachment of isoleucine to tRNA(Ile). As IleRS can inadvertently accommodate and process structurally similar amino acids such as valine, to avoid such errors it has two additional distinct tRNA(Ile)-dependent editing activities. One activity is designated as 'pretransfer' editing and involves the hydrolysis of activated Val-AMP. The other activity is designated 'posttransfer' editing and involves deacylation of mischarged Val-tRNA(Ile). The polypeptide is Isoleucine--tRNA ligase (Ralstonia pickettii (strain 12J)).